A 1026-amino-acid chain; its full sequence is DNA polymerase catalytic subunit (1026 aa).

Residues Leu664 to Leu695 adopt a coiled-coil conformation.

Belongs to the DNA polymerase type-B family.

It is found in the host nucleus. It carries out the reaction DNA(n) + a 2'-deoxyribonucleoside 5'-triphosphate = DNA(n+1) + diphosphate. In terms of biological role, replicates viral genomic DNA. This chain is DNA polymerase catalytic subunit (9), found in Alcelaphine herpesvirus 1 (strain C500) (AlHV-1).